Here is a 352-residue protein sequence, read N- to C-terminus: Neutral protease 2 homolog ATEG_04941 (352 aa).

A signal peptide spans 1-19 (MRFTALATAILPLACNVLA). Residues 20–175 (LPAKTGEAPK…ASAVKPLDKR (156 aa)) constitute a propeptide that is removed on maturation. Intrachain disulfides connect Cys-181–Cys-253 and Cys-260–Cys-278. His-303 is a binding site for Zn(2+). The active site involves Glu-304. Residues His-307 and Asp-318 each contribute to the Zn(2+) site.

It belongs to the peptidase M35 family. Zn(2+) is required as a cofactor.

It localises to the secreted. It carries out the reaction Preferential cleavage of bonds with hydrophobic residues in P1'. Also 3-Asn-|-Gln-4 and 8-Gly-|-Ser-9 bonds in insulin B chain.. Secreted metalloproteinase that allows assimilation of proteinaceous substrates. Shows high activities on basic nuclear substrates such as histone and protamine. In Aspergillus terreus (strain NIH 2624 / FGSC A1156), this protein is Neutral protease 2 homolog ATEG_04941.